The chain runs to 34 residues: N(4)-(Beta-N-acetylglucosaminyl)-L-asparaginase (34 aa).

Thr-18 acts as the Nucleophile in catalysis.

Belongs to the Ntn-hydrolase family. Heterotetramer of two alpha and two beta chains arranged as a dimer of alpha/beta heterodimers. Post-translationally, cleaved into an alpha and beta chain by autocatalysis; this activates the enzyme. The N-terminal residue of the beta subunit is responsible for the nucleophile hydrolase activity. In terms of processing, N-glycosylated.

It localises to the lysosome. The enzyme catalyses N(4)-(beta-N-acetyl-D-glucosaminyl)-L-asparagine + H2O = N-acetyl-beta-D-glucosaminylamine + L-aspartate + H(+). Its function is as follows. Cleaves the GlcNAc-Asn bond which joins oligosaccharides to the peptide of asparagine-linked glycoproteins. The protein is N(4)-(Beta-N-acetylglucosaminyl)-L-asparaginase (AGA) of Sus scrofa (Pig).